The sequence spans 174 residues: Nucleoside-triphosphatase THEP1 (174 aa).

ATP contacts are provided by residues 7 to 14 and 94 to 101; these read GRPGVGKT and LIIIDEIG.

The protein belongs to the THEP1 NTPase family.

The catalysed reaction is a ribonucleoside 5'-triphosphate + H2O = a ribonucleoside 5'-diphosphate + phosphate + H(+). In terms of biological role, has nucleotide phosphatase activity towards ATP, GTP, CTP, TTP and UTP. May hydrolyze nucleoside diphosphates with lower efficiency. In Thermotoga sp. (strain RQ2), this protein is Nucleoside-triphosphatase THEP1.